The primary structure comprises 258 residues: Snake venom serine protease CL2 (258 aa).

The N-terminal stretch at 1–18 (MVLIRVLANLLIIQLSYA) is a signal peptide. A propeptide spanning residues 19–24 (QKSSEL) is cleaved from the precursor. The Peptidase S1 domain occupies 25–249 (VIGGDECNIN…YTDWIKSIIA (225 aa)). 6 disulfides stabilise this stretch: Cys-31-Cys-163, Cys-50-Cys-66, Cys-98-Cys-256, Cys-142-Cys-210, Cys-174-Cys-189, and Cys-200-Cys-225. N-linked (GlcNAc...) asparagine glycosylation occurs at Asn-44. His-65 functions as the Charge relay system in the catalytic mechanism. Asn-103 is a glycosylation site (N-linked (GlcNAc...) asparagine). Catalysis depends on Asp-110, which acts as the Charge relay system. Asn-121 carries an N-linked (GlcNAc...) asparagine glycan. The active-site Charge relay system is Ser-204. N-linked (GlcNAc...) asparagine glycosylation occurs at Asn-251.

The protein belongs to the peptidase S1 family. Snake venom subfamily. In terms of assembly, monomer. Expressed by the venom gland.

The protein resides in the secreted. Functionally, snake venom serine protease that may act in the hemostasis system of the prey. This chain is Snake venom serine protease CL2, found in Trimeresurus stejnegeri (Chinese green tree viper).